The following is a 376-amino-acid chain: Carbamoyl phosphate synthase small chain (376 aa).

The tract at residues 1 to 187 is CPSase; it reads MRAFLALEDG…AADGAYAWPG (187 aa). S45, G239, and G241 together coordinate L-glutamine. One can recognise a Glutamine amidotransferase type-1 domain in the interval 191–376; that stretch reads RLVVYDYGIK…RGMVREAVGR (186 aa). Residue C266 is the Nucleophile of the active site. Residues L267, Q270, N308, G310, and F311 each coordinate L-glutamine. Active-site residues include H349 and E351.

This sequence belongs to the CarA family. As to quaternary structure, composed of two chains; the small (or glutamine) chain promotes the hydrolysis of glutamine to ammonia, which is used by the large (or ammonia) chain to synthesize carbamoyl phosphate. Tetramer of heterodimers (alpha,beta)4.

The catalysed reaction is hydrogencarbonate + L-glutamine + 2 ATP + H2O = carbamoyl phosphate + L-glutamate + 2 ADP + phosphate + 2 H(+). It carries out the reaction L-glutamine + H2O = L-glutamate + NH4(+). Its pathway is amino-acid biosynthesis; L-arginine biosynthesis; carbamoyl phosphate from bicarbonate: step 1/1. It functions in the pathway pyrimidine metabolism; UMP biosynthesis via de novo pathway; (S)-dihydroorotate from bicarbonate: step 1/3. Its function is as follows. Small subunit of the glutamine-dependent carbamoyl phosphate synthetase (CPSase). CPSase catalyzes the formation of carbamoyl phosphate from the ammonia moiety of glutamine, carbonate, and phosphate donated by ATP, constituting the first step of 2 biosynthetic pathways, one leading to arginine and/or urea and the other to pyrimidine nucleotides. The small subunit (glutamine amidotransferase) binds and cleaves glutamine to supply the large subunit with the substrate ammonia. The chain is Carbamoyl phosphate synthase small chain from Nitratidesulfovibrio vulgaris (strain DSM 19637 / Miyazaki F) (Desulfovibrio vulgaris).